The sequence spans 1053 residues: Mgp-operon protein 3 (1053 aa).

Residues 1 to 25 form the signal peptide; the sequence is MKTMRKQIYKKAYWLLLPFLPLALA. 2 disordered regions span residues 162-207 and 224-261; these read SLAK…GFKL and EPID…GGSS. The span at 164–175 shows a compositional bias: basic and acidic residues; it reads AKEKGKTQREVH. The span at 179-207 shows a compositional bias: polar residues; it reads GQANQWTSQRNQHDLNNNPSPNASTGFKL. Residues 946 to 966 form a helical membrane-spanning segment; sequence VGSSVGILFILLVLGLGIGIP. Positions 1024–1053 are disordered; sequence AAFLKPPVQPPSKPEGEQKAVEVKSEETKS. The span at 1037–1053 shows a compositional bias: basic and acidic residues; it reads PEGEQKAVEVKSEETKS.

It localises to the cell membrane. The protein is Mgp-operon protein 3 of Mycoplasma genitalium (strain ATCC 33530 / DSM 19775 / NCTC 10195 / G37) (Mycoplasmoides genitalium).